Reading from the N-terminus, the 1294-residue chain is CLIP-associating protein 2 (1294 aa).

The tract at residues 1 to 61 (MAMGDDKSFD…KVGGASKEGG (61 aa)) is disordered. Phosphoserine occurs at positions 8 and 14. The span at 47–61 (SAGGPKVGGASKEGG) shows a compositional bias: gly residues. Residues 60 to 311 (GGAGAVDEDD…KSLQTYLKSS (252 aa)) are TOG 1. HEAT repeat units follow at residues 173-208 (HGAE…IRHT), 209-245 (HVPR…EWQT), and 250-287 (RHAA…HFPG). The tract at residues 314-368 (VASLPQSDRSSSSSQESLNRPFSSKWSTANPSTVAGRVSAGSSKASSLPGSLQRS) is disordered. Ser316, Ser327, and Ser330 each carry phosphoserine. Positions 316–334 (SLPQSDRSSSSSQESLNRP) are enriched in low complexity. 2 stretches are compositionally biased toward polar residues: residues 335-346 (FSSKWSTANPST) and 353-367 (AGSS…SLQR). Ser360, Ser368, Ser370, and Ser407 each carry phosphoserine. The segment at 409–467 (EDTSDKLDGTASEDGRVRAKLSAPLAGMGNAKADSRGRSRTKMVSQSQPGSRSGSPGRV) is disordered. Residues 411–425 (TSDKLDGTASEDGRV) are compositionally biased toward basic and acidic residues. Residues 444–580 (RGRSRTKMVS…GPGYGISQSS (137 aa)) form an interaction with microtubules, MAPRE1 and MAPRE3 region. Low complexity predominate over residues 453 to 467 (SQSQPGSRSGSPGRV). 5 positions are modified to phosphoserine: Ser455, Ser459, Ser463, Ser478, and Ser489. The interval 488–557 (ASAQKRSKIP…PLASRHHSRS (70 aa)) is disordered. Positions 494–497 (SKIP) match the SXIP motif 1; mediates interaction with MAPRE1 and targeting to microtubule plus ends motif. Ser507 is subject to Phosphoserine. Positions 517-520 (SRIP) match the SXIP motif 2; mediates interaction with MAPRE1 and targeting to microtubule plus ends motif. 7 positions are modified to phosphoserine: Ser525, Ser529, Ser585, Ser587, Ser596, Ser621, and Ser627. Residues 617 to 645 (YGMHSDDDANSDASSACSERSYSSRNGSI) form a disordered region. The segment covering 627–641 (SDASSACSERSYSSR) has biased composition (low complexity). A TOG 2 region spans residues 649–881 (MRQTEDVAEV…TKLLHNHLRN (233 aa)). 2 HEAT repeats span residues 710–747 (RVFS…KMGA) and 772–809 (LQFN…QMDP). The residue at position 787 (Thr787) is a Phosphothreonine. The tract at residues 872-1294 (TKLLHNHLRN…DPTTDVSGQS (423 aa)) is interaction with RSN and localization to the Golgi and kinetochores. 2 disordered regions span residues 878–928 (HLRN…FDYD) and 952–995 (SFRS…DSSQ). 2 stretches are compositionally biased toward polar residues: residues 880 to 892 (RNTG…SMGS) and 901 to 922 (SPAN…TLSP). A Phosphoserine modification is found at Ser892. Phosphoserine occurs at positions 952, 955, 1013, and 1029. Over residues 955–972 (SQEDMNEPLKRDSKKDDG) the composition is skewed to basic and acidic residues. Residues 1017–1294 (RDYNPYNYSD…DPTTDVSGQS (278 aa)) are required for cortical localization. HEAT repeat units lie at residues 1054 to 1091 (LDHS…TQEE), 1098 to 1135 (EHFK…HQPA), and 1216 to 1253 (LLLP…VIGD).

This sequence belongs to the CLASP family. Interacts with microtubules. Interacts with MAPRE1; probably required for targeting to the growing microtubule plus ends. Interacts with CLIP2, ERC1, MAPRE3, PHLDB2 and RSN. The interaction with ERC1 may be mediated by PHLDB2. Interacts with GCC2; recruits CLASP2 to Golgi membranes. Interacts with MACF1. Interacts with mtcl2 and MTCL1. Phosphorylated by GSK3B. Phosphorylation reduces MAPRE1 binding. Phosphorylation by GSK3B may negatively regulate binding to microtubule lattices in lamella. Brain-specific.

The protein localises to the cytoplasm. The protein resides in the cytoskeleton. It is found in the microtubule organizing center. It localises to the centrosome. Its subcellular location is the chromosome. The protein localises to the centromere. The protein resides in the kinetochore. It is found in the spindle. It localises to the golgi apparatus. Its subcellular location is the trans-Golgi network. The protein localises to the cell membrane. The protein resides in the cell projection. It is found in the ruffle membrane. It localises to the cell cortex. Microtubule plus-end tracking protein that promotes the stabilization of dynamic microtubules. Involved in the nucleation of noncentrosomal microtubules originating from the trans-Golgi network (TGN). Required for the polarization of the cytoplasmic microtubule arrays in migrating cells towards the leading edge of the cell. May act at the cell cortex to enhance the frequency of rescue of depolymerizing microtubules by attaching their plus-ends to cortical platforms composed of ERC1 and PHLDB2. This cortical microtubule stabilizing activity is regulated at least in part by phosphatidylinositol 3-kinase signaling. Also performs a similar stabilizing function at the kinetochore which is essential for the bipolar alignment of chromosomes on the mitotic spindle. Acts as a mediator of ERBB2-dependent stabilization of microtubules at the cell cortex. This Homo sapiens (Human) protein is CLIP-associating protein 2 (CLASP2).